Consider the following 318-residue polypeptide: MATLEQPYLDLLSKIMSEGHDKEDRTGTGTRSLFGAQMRFDLNDGFPILTTKKIPFGLIKSELLWFLRGDTNIRFLLEHNNHIWDEWAFKNWVESNEYQGPDMTNFGLRSQQDPEFKRIYQEEMKKFDQKVLEDQTFAEKYGNLGDVYGAQWRHWQKREGGFIDQIQNVIDQIKKTPYSRRLIVSAWNPEDVPTSALPPCHVLFQFYVNDGCLSLQLYQRSGDMFLGVPFNIASYALLVNLVARETGLKPGEFIHTLGDAHIYKNHFNQVKELLNRSAYDAPMLWLNPDKKLVQDFEMKDIKLINYRHHGTIKAPVAV.

DUMP contacts are provided by residues arginine 25 and 180–181 (RR). The active-site Nucleophile is the cysteine 200. Residues 220–223 (RSGD), asparagine 231, and 261–263 (HIY) each bind dUMP. Aspartate 223 is a binding site for (6R)-5,10-methylene-5,6,7,8-tetrahydrofolate. Alanine 317 serves as a coordination point for (6R)-5,10-methylene-5,6,7,8-tetrahydrofolate.

It belongs to the thymidylate synthase family. Bacterial-type ThyA subfamily. Homodimer.

It localises to the cytoplasm. It carries out the reaction dUMP + (6R)-5,10-methylene-5,6,7,8-tetrahydrofolate = 7,8-dihydrofolate + dTMP. Its pathway is pyrimidine metabolism; dTTP biosynthesis. In terms of biological role, catalyzes the reductive methylation of 2'-deoxyuridine-5'-monophosphate (dUMP) to 2'-deoxythymidine-5'-monophosphate (dTMP) while utilizing 5,10-methylenetetrahydrofolate (mTHF) as the methyl donor and reductant in the reaction, yielding dihydrofolate (DHF) as a by-product. This enzymatic reaction provides an intracellular de novo source of dTMP, an essential precursor for DNA biosynthesis. The protein is Thymidylate synthase of Lactobacillus johnsonii (strain CNCM I-12250 / La1 / NCC 533).